The primary structure comprises 79 residues: MTNWDPNHPSLRSPIAPHETACVLRMHRAGYKGRATMKILKLRGTRLMNQMQRALDAETHAARAGRPIHDALIDPKKVK.

Positions 58-79 (ETHAARAGRPIHDALIDPKKVK) are disordered.

In Mycobacterium (Mycobacteriophage L5), this protein is Gene 68 protein (68).